The following is a 508-amino-acid chain: Drug efflux pump JefA (508 aa).

14 helical membrane passes run Val-9 to Ala-29, Trp-46 to Gly-66, Phe-75 to Leu-95, Ile-104 to Phe-124, Asn-136 to Val-156, Ser-163 to Val-183, Leu-194 to Ile-214, Gln-222 to Val-242, Ser-265 to Thr-285, Leu-297 to Ala-317, Leu-328 to Met-348, Val-354 to Leu-374, Leu-399 to Ala-419, and Gly-479 to Trp-499.

Belongs to the major facilitator superfamily.

The protein resides in the cell inner membrane. Its function is as follows. Involved in resistance to ethambutol and isoniazid. This chain is Drug efflux pump JefA, found in Mycobacterium tuberculosis (strain CDC 1551 / Oshkosh).